A 259-amino-acid chain; its full sequence is Oxaloacetate tautomerase FMP41, mitochondrial (259 aa).

Mg(2+) contacts are provided by glutamate 87, glutamate 89, and aspartate 121.

It belongs to the FAH family. It depends on Mg(2+) as a cofactor. Mn(2+) serves as cofactor.

The protein resides in the mitochondrion. It catalyses the reaction oxaloacetate = enol-oxaloacetate. Its function is as follows. Tautomerase that converts enol-oxaloacetate, a strong inhibitor of succinate dehydrogenase, to the physiological keto form of oxaloacetate. The sequence is that of Oxaloacetate tautomerase FMP41, mitochondrial from Saccharomyces cerevisiae (strain ATCC 204508 / S288c) (Baker's yeast).